Here is a 116-residue protein sequence, read N- to C-terminus: Co-chaperonin GroES (116 aa).

It belongs to the GroES chaperonin family. Heptamer of 7 subunits arranged in a ring. Interacts with the chaperonin GroEL.

It localises to the cytoplasm. Together with the chaperonin GroEL, plays an essential role in assisting protein folding. The GroEL-GroES system forms a nano-cage that allows encapsulation of the non-native substrate proteins and provides a physical environment optimized to promote and accelerate protein folding. GroES binds to the apical surface of the GroEL ring, thereby capping the opening of the GroEL channel. This is Co-chaperonin GroES from Mycoplasma pneumoniae (strain ATCC 29342 / M129 / Subtype 1) (Mycoplasmoides pneumoniae).